The sequence spans 984 residues: Calsyntenin-1 (984 aa).

The first 18 residues, 1 to 18, serve as a signal peptide directing secretion; sequence MRTAYFIFVGALLGVSYA. The Extracellular segment spans residues 19–850; sequence KHHHAARAPI…VGQGAIAGGA (832 aa). Cadherin domains are found at residues 66 to 142 and 143 to 257; these read YLLT…APEI and ENPW…APGV. 2 N-linked (GlcNAc...) asparagine glycosylation sites follow: asparagine 206 and asparagine 305. The helical transmembrane segment at 851-871 threads the bilayer; sequence VAVVVVVCVGFLLVLLVIGVL. The Cytoplasmic portion of the chain corresponds to 872–984; sequence KMRDTPMPRR…ISTNARSYRV (113 aa). A disordered region spans residues 878–959; it reads MPRRRRQKRQ…QTEVLPHLDA (82 aa). Over residues 886–896 the composition is skewed to basic and acidic residues; it reads RQSDGGMHWDD. Over residues 918–951 the composition is skewed to acidic residues; the sequence is EFSDEEEEEETDGESECSYRDEEDDVSEDEEDQT.

Belongs to the calsyntenin family. As to quaternary structure, interacts with isoform c of daf-2 (daf-2c); promoting daf-2c localization to synaptic regions. Interacts with klc-2. Interacts with unc-104. A proportion of the protein is proteolytically cleaved before the transmembrane domain in neurons, leading to release in the extracellular space. As to expression, widely expressed in the nervous system. Highly expressed in many head neurons, including most amphid sensory neurons. Also expressed in other tissues, such as intestine and gonadal sheath cells.

It localises to the golgi apparatus membrane. It is found in the perikaryon. The protein resides in the cell projection. The protein localises to the axon. Its subcellular location is the secreted. It localises to the synaptic cleft. Its function is as follows. Cell adhesion molecule involved in associative learning and memory. Acts as a regulator of GABAergic synaptic transmission at neuromuscular junctions by regulating GABA synaptic vesicle precursor transport: possibly functions as a cargo adapter for unc-104-mediated transport of synaptic vesicle precursors. Promotes localization of isoform c of daf-2 (daf-2c) to synaptic regions by acting as a signaling adapter between klc-2 and daf-2c. Functionally, acts as aregulator of glutamate signaling in the sensory neurons by inhibiting the activity of command interneurons, thereby negatively regulating motor circuit activity and locomotion. In Caenorhabditis elegans, this protein is Calsyntenin-1.